The sequence spans 1097 residues: RecBCD enzyme subunit RecC (1097 aa).

This sequence belongs to the RecC family. Heterotrimer of RecB, RecC and RecD. All subunits contribute to DNA-binding.

Its function is as follows. A helicase/nuclease that prepares dsDNA breaks (DSB) for recombinational DNA repair. Binds to DSBs and unwinds DNA via a highly rapid and processive ATP-dependent bidirectional helicase activity. Holoenzyme degrades any linearized DNA that is unable to undergo homologous recombination. In the holoenzyme this subunit recognizes the wild-type Chi sequence, and when added to isolated RecB increases its ATP-dependent helicase processivity. Unlike the case in E.coli, suppresses RecA-dependent homologous recombination, is instead required for single-strand annealing pathway repair of DSB. The protein is RecBCD enzyme subunit RecC of Mycobacterium tuberculosis (strain ATCC 25618 / H37Rv).